Here is a 35-residue protein sequence, read N- to C-terminus: Photosystem II reaction center protein T (35 aa).

Residues A3–F23 traverse the membrane as a helical segment.

This sequence belongs to the PsbT family. In terms of assembly, PSII is composed of 1 copy each of membrane proteins PsbA, PsbB, PsbC, PsbD, PsbE, PsbF, PsbH, PsbI, PsbJ, PsbK, PsbL, PsbM, PsbT, PsbY, PsbZ, Psb30/Ycf12, at least 3 peripheral proteins of the oxygen-evolving complex and a large number of cofactors. It forms dimeric complexes.

It localises to the plastid. The protein resides in the chloroplast thylakoid membrane. In terms of biological role, found at the monomer-monomer interface of the photosystem II (PS II) dimer, plays a role in assembly and dimerization of PSII. PSII is a light-driven water plastoquinone oxidoreductase, using light energy to abstract electrons from H(2)O, generating a proton gradient subsequently used for ATP formation. The chain is Photosystem II reaction center protein T from Nelumbo lutea (American lotus).